A 516-amino-acid polypeptide reads, in one-letter code: GMP synthase [glutamine-hydrolyzing] (516 aa).

The Glutamine amidotransferase type-1 domain occupies 6-199 (KVLILDFGSQ…LFEIAGLTSG (194 aa)). Catalysis depends on cysteine 83, which acts as the Nucleophile. Catalysis depends on residues histidine 173 and glutamate 175. The GMPS ATP-PPase domain maps to 200–391 (WTMSSFLETE…LGMPDFIIWR (192 aa)). 227 to 233 (SGGVDST) serves as a coordination point for ATP.

As to quaternary structure, homodimer.

It catalyses the reaction XMP + L-glutamine + ATP + H2O = GMP + L-glutamate + AMP + diphosphate + 2 H(+). It participates in purine metabolism; GMP biosynthesis; GMP from XMP (L-Gln route): step 1/1. Catalyzes the synthesis of GMP from XMP. This is GMP synthase [glutamine-hydrolyzing] from Solidesulfovibrio magneticus (strain ATCC 700980 / DSM 13731 / RS-1) (Desulfovibrio magneticus).